Reading from the N-terminus, the 286-residue chain is ATP synthase gamma chain (286 aa).

The protein belongs to the ATPase gamma chain family. As to quaternary structure, F-type ATPases have 2 components, CF(1) - the catalytic core - and CF(0) - the membrane proton channel. CF(1) has five subunits: alpha(3), beta(3), gamma(1), delta(1), epsilon(1). CF(0) has three main subunits: a, b and c.

The protein localises to the cell inner membrane. Produces ATP from ADP in the presence of a proton gradient across the membrane. The gamma chain is believed to be important in regulating ATPase activity and the flow of protons through the CF(0) complex. This Shewanella loihica (strain ATCC BAA-1088 / PV-4) protein is ATP synthase gamma chain.